Reading from the N-terminus, the 610-residue chain is F-box/LRR-repeat protein 4 (610 aa).

The region spanning 5 to 52 (DRINNCLPEELILEIFRRLESKPNRDACSLVCKRWLSLERFSRTTLRI) is the F-box domain. 19 LRR repeats span residues 53–79 (GASFSPDDFISLLSRRFLYITSIHVDE), 124–149 (SSSLTDTGLTALANGFPRIENLSLIW), 150–175 (CPNVSSVGLCSLAQKCTSLKSLDLQG), 178–200 (VGDQGLAAVGKFCKQLEELNLRF), 201–227 (CEGLTDVGVIDLVVGCSKSLKSIGVAA), 228–253 (SAKITDLSLEAVGSHCKLLEVLYLDS), 256–277 (IHDKGLIAVAQGCHRLKNLKLQ), 278–303 (CVSVTDVAFAAVGELCTSLERLALYS), 304–329 (FQHFTDKGMRAIGKGSKKLKDLTLSD), 330–355 (CYFVSCKGLEAIAHGCKELERVEING), 356–381 (CHNIGTRGIEAIGKSCPRLKELALLY), 382–407 (CQRIGNSALQEIGKGCKSLEILHLVD), 408–433 (CSGIGDIAMCSIAKGCRNLKKLHIRR), 434–459 (CYEIGNKGIISIGKHCKSLTELSLRF), 460–484 (CDKVGNKALIAIGKGCSLQQLNVSG), 485–510 (CNQISDAGITAIARGCPQLTHLDISV), 511–536 (LQNIGDMPLAELGEGCPMLKDLVLSH), 537–562 (CHHITDNGLNHLVQKCKLLETCHMVY), and 563–588 (CPGITSAGVATVVSSCPHIKKVLIEK). Residues 88 to 125 (LSPSPKRKRGRDSSSPSSSKRKKLTDKTHSGAENVESS) form a disordered region.

The sequence is that of F-box/LRR-repeat protein 4 (FBL4) from Arabidopsis thaliana (Mouse-ear cress).